Here is a 709-residue protein sequence, read N- to C-terminus: Protein transport protein SEC39 (709 aa).

This sequence belongs to the SEC39 family. As to quaternary structure, component of a peripheral membrane protein complex consisting of DSL1, SEC39/DSL3 and TIP20. Bound to a SNARE complex consisting of UFE1, USE1, SEC20 and SEC22 or YKT6 through direct interaction of TIP20 with SEC20. Interacts with TIP20 and DSL1.

The protein localises to the endoplasmic reticulum membrane. In terms of biological role, required for protein transport between the Golgi and the endoplasmic reticulum. May contribute to tethering of coatomer-coated retrograde transport vesicles to the ER membrane through interaction with and stabilization of the SNARE complex. The sequence is that of Protein transport protein SEC39 from Saccharomyces cerevisiae (strain ATCC 204508 / S288c) (Baker's yeast).